Here is a 109-residue protein sequence, read N- to C-terminus: Nucleoid-associated protein APL_0075 (109 aa).

Residues Met1–Met21 are disordered. Positions Leu10 to Glu19 are enriched in low complexity.

It belongs to the YbaB/EbfC family. As to quaternary structure, homodimer.

It localises to the cytoplasm. The protein localises to the nucleoid. Binds to DNA and alters its conformation. May be involved in regulation of gene expression, nucleoid organization and DNA protection. The polypeptide is Nucleoid-associated protein APL_0075 (Actinobacillus pleuropneumoniae serotype 5b (strain L20)).